We begin with the raw amino-acid sequence, 60 residues long: Mastoparan (60 aa).

An N-terminal signal peptide occupies residues 1–27 (MKDTILILFTAFIALLGFFGMSAEALA). AXPX repeat units lie at residues 27–30 (ADPL), 31–34 (ADPS), 35–38 (AGPN), and 41–44 (ADPE). The propeptide occupies 28-45 (DPLADPSAGPNAEADPEA). At leucine 59 the chain carries Leucine amide.

This sequence belongs to the MCD family. Mastoparan subfamily. In terms of tissue distribution, expressed by the venom gland.

The protein resides in the secreted. It localises to the target cell membrane. Mast cell degranulating peptide. Its mast cell degranulation activity may be related to the activation of G-protein coupled receptors in mast cells as well as interaction with other proteins located in cell endosomal membranes in the mast cells. Has a membranolytic activity on human glioblastoma multiforme cells (brain tumor cells) that leads to cell necrosis. The protein is Mastoparan of Vespa orientalis (Oriental hornet).